A 435-amino-acid chain; its full sequence is Xylose isomerase (435 aa).

Active-site residues include His100 and Asp103. Mg(2+) contacts are provided by Glu231, Glu267, His270, Asp295, Asp306, Asp308, and Asp338.

The protein belongs to the xylose isomerase family. Homotetramer. Mg(2+) is required as a cofactor.

It is found in the cytoplasm. The enzyme catalyses alpha-D-xylose = alpha-D-xylulofuranose. This Brucella anthropi (strain ATCC 49188 / DSM 6882 / CCUG 24695 / JCM 21032 / LMG 3331 / NBRC 15819 / NCTC 12168 / Alc 37) (Ochrobactrum anthropi) protein is Xylose isomerase.